We begin with the raw amino-acid sequence, 1358 residues long: Xanthine dehydrogenase (1358 aa).

Residues 18–107 (NQLLFFLNGE…GMAVTTIEGL (90 aa)) form the 2Fe-2S ferredoxin-type domain. Positions 56, 61, 64, 89, 129, 132, 164, and 166 each coordinate [2Fe-2S] cluster. An FAD-binding PCMH-type domain is found at 253 to 447 (FTGSRVTWYT…ESVFIPYTRP (195 aa)). FAD contacts are provided by residues 281–288 (IVVGNTEI), Phe366, 376–380 (SIGGN), Asp389, Leu437, and Lys455. Positions 805 and 836 each coordinate Mo-molybdopterin. The substrate site is built by Glu840 and Arg918. Position 950 (Arg950) interacts with Mo-molybdopterin. Substrate-binding residues include Tyr952 and Thr1048. Ala1117 provides a ligand contact to Mo-molybdopterin. The Proton acceptor role is filled by Glu1302.

The protein belongs to the xanthine dehydrogenase family. In terms of assembly, homodimer. It depends on FAD as a cofactor. Mo-molybdopterin is required as a cofactor. The cofactor is [2Fe-2S] cluster.

Its subcellular location is the peroxisome. The catalysed reaction is xanthine + NAD(+) + H2O = urate + NADH + H(+). It catalyses the reaction hypoxanthine + NAD(+) + H2O = xanthine + NADH + H(+). Functionally, key enzyme in purine degradation. Catalyzes the oxidation of hypoxanthine to xanthine. Catalyzes the oxidation of xanthine to uric acid. This Dictyostelium discoideum (Social amoeba) protein is Xanthine dehydrogenase (xdh).